The chain runs to 158 residues: Transcription elongation factor GreA (158 aa).

Positions 3-75 form a coiled coil; sequence TEKTYPMTQE…TQLENMIRNA (73 aa).

The protein belongs to the GreA/GreB family.

Its function is as follows. Necessary for efficient RNA polymerase transcription elongation past template-encoded arresting sites. The arresting sites in DNA have the property of trapping a certain fraction of elongating RNA polymerases that pass through, resulting in locked ternary complexes. Cleavage of the nascent transcript by cleavage factors such as GreA or GreB allows the resumption of elongation from the new 3'terminus. GreA releases sequences of 2 to 3 nucleotides. In Bacillus cereus (strain ATCC 14579 / DSM 31 / CCUG 7414 / JCM 2152 / NBRC 15305 / NCIMB 9373 / NCTC 2599 / NRRL B-3711), this protein is Transcription elongation factor GreA.